Reading from the N-terminus, the 95-residue chain is MKPLHEILKRPLVTEKTVQQEGEAQVVAFEVKREANKVEIKKAVEQAFEVKVKNVNTVLVAGKVKRLGRTYGKRSNWKKAYVTLAEGSSIDLFGV.

This sequence belongs to the universal ribosomal protein uL23 family. As to quaternary structure, part of the 50S ribosomal subunit. Contacts protein L29, and trigger factor when it is bound to the ribosome.

In terms of biological role, one of the early assembly proteins it binds 23S rRNA. One of the proteins that surrounds the polypeptide exit tunnel on the outside of the ribosome. Forms the main docking site for trigger factor binding to the ribosome. The sequence is that of Large ribosomal subunit protein uL23 from Syntrophotalea carbinolica (strain DSM 2380 / NBRC 103641 / GraBd1) (Pelobacter carbinolicus).